The following is a 147-amino-acid chain: Small ribosomal subunit protein uS12 (147 aa).

The tract at residues 1–22 (MPTINQLVRKPRKSKIEKSDSP) is disordered. A 3-methylthioaspartic acid modification is found at aspartate 102.

The protein belongs to the universal ribosomal protein uS12 family. In terms of assembly, part of the 30S ribosomal subunit. Contacts proteins S8 and S17. May interact with IF1 in the 30S initiation complex.

With S4 and S5 plays an important role in translational accuracy. In terms of biological role, interacts with and stabilizes bases of the 16S rRNA that are involved in tRNA selection in the A site and with the mRNA backbone. Located at the interface of the 30S and 50S subunits, it traverses the body of the 30S subunit contacting proteins on the other side and probably holding the rRNA structure together. The combined cluster of proteins S8, S12 and S17 appears to hold together the shoulder and platform of the 30S subunit. The polypeptide is Small ribosomal subunit protein uS12 (Streptococcus pyogenes serotype M12 (strain MGAS2096)).